A 471-amino-acid polypeptide reads, in one-letter code: MAAPGTPPPSASGGGGGEPRQLPELIRLKRDGGHLREADIRNFVHAVIDGRAQDTQIGAMLMAIRLQGMNLEETSVLTRALAESGQQLEWPKAWHQQLVDKHSTGGVGDKVSLVLAPALAACGCKVPMISGRSLGHTGGTLDKLESIPGFGVTQSPEQMLHILEEVGCCIVGQSAKLVPADGILYAARDVTATVDSVPLITASILSKKAVEGLSTLVVDVKFGGAAVFPDQEKARELAKMLVRVGVSLGLKVAAALTAMDNPLGRSVGHTLEVEEALLCLDGAGPPDLRDLVIRLGGAILWISGQAETQDQGAARVAAALDDGSARRRFQLMLSAQGVDPGLAKALCSGSPTQRRQLLPHAREQEELLAPADGIVECVRALPLARVLHDLGAGRSRAGQPIRPGVGAEVLVDVGQCLSRGTPWLRVHLDGPALSSQQRRTLQGALVLSDRAPFKVPSPFAELVLPPTIAQP.

Pro residues predominate over residues 1–10 (MAAPGTPPPS). A disordered region spans residues 1 to 21 (MAAPGTPPPSASGGGGGEPRQ). Thr6 carries the phosphothreonine modification. His102, Arg188, Ser203, and Lys207 together coordinate substrate.

The protein belongs to the thymidine/pyrimidine-nucleoside phosphorylase family. In terms of assembly, homodimer.

It catalyses the reaction thymidine + phosphate = 2-deoxy-alpha-D-ribose 1-phosphate + thymine. It functions in the pathway pyrimidine metabolism; dTMP biosynthesis via salvage pathway; dTMP from thymine: step 1/2. In terms of biological role, catalyzes the reversible phosphorolysis of thymidine. The produced molecules are then utilized as carbon and energy sources or in the rescue of pyrimidine bases for nucleotide synthesis. The polypeptide is Thymidine phosphorylase (Tymp) (Mus musculus (Mouse)).